The following is a 529-amino-acid chain: tRNA pseudouridine synthase Pus10 (529 aa).

Zn(2+)-binding residues include Cys21 and Cys24. A coiled-coil region spans residues 42–89 (KELLNELQKFLETEKDELILEVMNPPPKKIRLQELEDSIDNLSQNGEG). Residues Ser79 and Ser84 each carry the phosphoserine modification. 2 residues coordinate Zn(2+): Cys109 and Cys112. An RNA binding forefinger loop region spans residues 304 to 317 (TPWIIDGERKLESS). Asp344 (nucleophile) is an active-site residue. An RNA binding thumb loop region spans residues 442–457 (QKTPLRVLHRRPLAVR).

The protein belongs to the pseudouridine synthase Pus10 family. Interacts with components of the microprocessor complex DROSHA and DGCR8. In terms of processing, proteolytically cleaved during TRAIL-induced cell death. Cleaved, in vitro, either by caspase-3 (CASP3) or caspase-8 (CASP8).

Its subcellular location is the nucleus. The protein localises to the cytoplasm. It localises to the mitochondrion. It catalyses the reaction uridine(55) in tRNA = pseudouridine(55) in tRNA. The enzyme catalyses uridine(54) in tRNA = pseudouridine(54) in tRNA. Its function is as follows. Protein with different functions depending on its subcellular location: involved in miRNA processing in the nucleus and acts as a tRNA pseudouridylate synthase in the cytoplasm. In the cytoplasm, acts as a pseudouridylate synthase by catalyzing synthesis of pseudouridine(54) and pseudouridine(55) from uracil-54 and uracil-55, respectively, in the psi GC loop of a subset of tRNAs. tRNA pseudouridylate synthase activity is enhanced by the presence of 1-methyladenosine at position 53-61 of tRNAs. Does not show tRNA pseudouridylate synthase activity in the nucleus. In the nucleus, promotes primary microRNAs (pri-miRNAs) processing independently of its RNA pseudouridylate synthase activity. Binds pri-miRNAs. Modulator of TRAIL/TNFSF10-induced cell death via activation of procaspase-8 and BID cleavage. Required for the progression of the apoptotic signal through intrinsic mitochondrial cell death. This is tRNA pseudouridine synthase Pus10 from Homo sapiens (Human).